The following is a 226-amino-acid chain: ATP-dependent dethiobiotin synthetase BioD (226 aa).

Residue 13-18 participates in ATP binding; the sequence is DVGKTL. Residue T17 participates in Mg(2+) binding. Residue K38 is part of the active site. ATP contacts are provided by residues D55, 117 to 120, 177 to 178, 206 to 208, and E213; these read EGAG, NR, and PFV. D55 and E117 together coordinate Mg(2+).

Belongs to the dethiobiotin synthetase family. As to quaternary structure, homodimer. It depends on Mg(2+) as a cofactor.

It localises to the cytoplasm. The catalysed reaction is (7R,8S)-7,8-diammoniononanoate + CO2 + ATP = (4R,5S)-dethiobiotin + ADP + phosphate + 3 H(+). It participates in cofactor biosynthesis; biotin biosynthesis; biotin from 7,8-diaminononanoate: step 1/2. Functionally, catalyzes a mechanistically unusual reaction, the ATP-dependent insertion of CO2 between the N7 and N8 nitrogen atoms of 7,8-diaminopelargonic acid (DAPA, also called 7,8-diammoniononanoate) to form a ureido ring. This Aeromonas hydrophila subsp. hydrophila (strain ATCC 7966 / DSM 30187 / BCRC 13018 / CCUG 14551 / JCM 1027 / KCTC 2358 / NCIMB 9240 / NCTC 8049) protein is ATP-dependent dethiobiotin synthetase BioD.